Consider the following 427-residue polypeptide: Methylthioribose kinase 2 (427 aa).

ATP contacts are provided by residues 49–53, Lys68, and 122–124; these read DGNLN and RYI. Residue Asn51 participates in substrate binding. Residue Asp243 participates in substrate binding. 260-262 provides a ligand contact to ATP; it reads DPE. Arg370 provides a ligand contact to substrate.

This sequence belongs to the methylthioribose kinase family. In terms of assembly, homodimer.

It carries out the reaction 5-(methylsulfanyl)-D-ribose + ATP = 5-(methylsulfanyl)-alpha-D-ribose 1-phosphate + ADP + H(+). It participates in amino-acid biosynthesis; L-methionine biosynthesis via salvage pathway; S-methyl-5-thio-alpha-D-ribose 1-phosphate from S-methyl-5'-thioadenosine (hydrolase route): step 2/2. Catalyzes the phosphorylation of methylthioribose into methylthioribose-1-phosphate. The protein is Methylthioribose kinase 2 (MTK2) of Oryza sativa subsp. japonica (Rice).